The sequence spans 502 residues: MAISTPMLVTFCVYIFGMILIGFIAWRSTKNFDDYILGGRSLGPFVTALSAGASDMSGWLLMGLPGAVFLSGISESWIAIGLTLGAWINWKLVAGRLRVHTEYNNNALTLPDYFTGRFEDKSRILRIISALVILLFFTIYCASGIVAGARLFESTFGMSYETALWAGAAATILYTFIGGFLAVSWTDTVQASLMIFALILTPVIVIISVGGFGDSLEVIKQKSIENVDMLKGLNFVAIISLMGWGLGYFGQPHILARFMAADSHHSIVHARRISMTWMILCLAGAVAVGFFGIAYFNDHPALAGAVNQNAERVFIELAQILFNPWIAGILLSAILAAVMSTLSCQLLVCSSAITEDLYKAFLRKHASQKELVWVGRVMVLVVALVAIALAANPENRVLGLVSYAWAGFGAAFGPVVLFSVMWSRMTRNGALAGMIIGALTVIVWKQFGWLGLYEIIPGFIFGSIGIVVFSLLGKAPSAAMQKRFAEADAHYHSAPPSRLQES.

Over 1-5 (MAIST) the chain is Periplasmic. A helical transmembrane segment spans residues 6–26 (PMLVTFCVYIFGMILIGFIAW). Over 27–41 (RSTKNFDDYILGGRS) the chain is Cytoplasmic. 2 hydrophilic regions span residues 27-66 (RSTKNFDDYILGGRSLGPFVTALSAGASDMSGWLLMGLPG) and 88-124 (INWKLVAGRLRVHTEYNNNALTLPDYFTGRFEDKSRI). Residues 42 to 62 (LGPFVTALSAGASDMSGWLLM) traverse the membrane as a helical segment. Topologically, residues 63–67 (GLPGA) are periplasmic. Residues 68–88 (VFLSGISESWIAIGLTLGAWI) traverse the membrane as a helical segment. Over 89-126 (NWKLVAGRLRVHTEYNNNALTLPDYFTGRFEDKSRILR) the chain is Cytoplasmic. The helical transmembrane segment at 127 to 147 (IISALVILLFFTIYCASGIVA) threads the bilayer. The Periplasmic segment spans residues 148–162 (GARLFESTFGMSYET). The tract at residues 151–162 (LFESTFGMSYET) is hydrophilic. The helical transmembrane segment at 163–183 (ALWAGAAATILYTFIGGFLAV) threads the bilayer. Topologically, residues 184–192 (SWTDTVQAS) are cytoplasmic. The interval 185–189 (WTDTV) is hydrophilic. Residues 193-213 (LMIFALILTPVIVIISVGGFG) form a helical membrane-spanning segment. 3 hydrophilic regions span residues 214 to 231 (DSLEVIKQKSIENVDMLK), 249 to 274 (FGQPHILARFMAADSHHSIVHARRIS), and 296 to 319 (FNDHPALAGAVNQNAERVFIELAQ). Residues 214-234 (DSLEVIKQKSIENVDMLKGLN) lie on the Periplasmic side of the membrane. Residues 235-255 (FVAIISLMGWGLGYFGQPHIL) traverse the membrane as a helical segment. The Cytoplasmic portion of the chain corresponds to 256–275 (ARFMAADSHHSIVHARRISM). Residues 276–296 (TWMILCLAGAVAVGFFGIAYF) form a helical membrane-spanning segment. Residues 297–319 (NDHPALAGAVNQNAERVFIELAQ) are Periplasmic-facing. A helical membrane pass occupies residues 320-340 (ILFNPWIAGILLSAILAAVMS). The Cytoplasmic segment spans residues 341-370 (TLSCQLLVCSSAITEDLYKAFLRKHASQKE). A hydrophilic region spans residues 341-370 (TLSCQLLVCSSAITEDLYKAFLRKHASQKE). Residues 371–391 (LVWVGRVMVLVVALVAIALAA) traverse the membrane as a helical segment. At 392 to 397 (NPENRV) the chain is on the periplasmic side. The tract at residues 392–397 (NPENRV) is hydrophilic. A helical transmembrane segment spans residues 398 to 418 (LGLVSYAWAGFGAAFGPVVLF). Over 419–427 (SVMWSRMTR) the chain is Cytoplasmic. Hydrophilic stretches follow at residues 424 to 430 (RMTRNGA) and 446 to 448 (QFG). 2 consecutive transmembrane segments (helical) span residues 428-448 (NGALAGMIIGALTVIVWKQFG) and 449-469 (WLGLYEIIPGFIFGSIGIVVF). The Cytoplasmic segment spans residues 470–502 (SLLGKAPSAAMQKRFAEADAHYHSAPPSRLQES). The tract at residues 476–502 (PSAAMQKRFAEADAHYHSAPPSRLQES) is hydrophilic.

It belongs to the sodium:solute symporter (SSF) (TC 2.A.21) family. Has been isolated from inner membrane preparations as a homodimer.

Its subcellular location is the cell inner membrane. The catalysed reaction is L-proline(in) + Na(+)(in) = L-proline(out) + Na(+)(out). Its activity is regulated as follows. Activity is stimulated by phosphatidylethanolamine and phosphatidylglycerol, but not by phosphatidylcholine and cardiolipin. Proline uptake is inhibited by the sulfhydryl reagent N-ethylmaleimide (NEM). Proline, in the presence of Na(+) or Li(+), protects the carrier functions from NEM-inactivation. Its function is as follows. Catalyzes the sodium-dependent uptake of extracellular L-proline. This protein is also capable of using lithium as the transport cation. Also catalyzes the uptake of propionate. This is Sodium/proline symporter (putP) from Escherichia coli (strain K12).